A 652-amino-acid polypeptide reads, in one-letter code: MSEKIHPVTKPVKARALIDQAKYQKWYRQSVEDPDKFWGKHGQRIDWFKPYTKVKNTSFTGKVSIKWFEDGLTNVSYNCIDRHLKKHGDRVAFIWEGDNPYIDKKVTYNELYEHVCRLANVLKKHGVKKGDRVTIYMPMIPEAAYAMLACARIGAVHSVVFGGFSPEALGGRIVDCQSTFVITCDEGLRGGKPIPLKENTDTAIHIAAKQFVTVEKVLVVRRTGGKTGWAPGRDLWYHEETAKVKADCPPVKMKAEDPLFILYTSGSTGKPKGVLHTTGGYLVYAAMTHEYTFDYHPGDIYWCTADVGWVTGHSYIVYGPLANAATSLMFEGVPNYPDQGRFWDIIDKHKVNIFYTAPTAIRSLMGAGDHFVKRSSRSSLRLLGTVGEPINPEAWEWYYKVVGDSRSPIVDTWWQTETGGHMITPLPGATDLKPGSATLPFFGVQPELVDSEGKVLEGAADGNLVIADSWPGQMRTVYGDHERFIQTYFSTYKGKYFTGDGCRRDEDGYYWITGRVDDVLNVSGHRLGTAEVESALVSHKHVSEAAVVGYPHSIKGQGIYCYVTLMVGQEGSDALRQELVKHVRAEIGPIASPDKIQFTPGLPKTRSGKIMRRILRKIAEDDFGALGDTSTLADPAVVDDLIANRQNKADAA.

CoA-binding positions include 189–192 (RGGK), Thr311, and Asn335. ATP-binding positions include 387–389 (GEP), 411–416 (DTWWQT), Asp500, and Arg515. Ser523 provides a ligand contact to CoA. Position 526 (Arg526) interacts with ATP. Mg(2+) contacts are provided by Val537, His539, and Val542. Arg584 serves as a coordination point for CoA. At Lys609 the chain carries N6-acetyllysine.

Belongs to the ATP-dependent AMP-binding enzyme family. It depends on Mg(2+) as a cofactor. In terms of processing, acetylated. Deacetylation by the SIR2-homolog deacetylase activates the enzyme.

The enzyme catalyses acetate + ATP + CoA = acetyl-CoA + AMP + diphosphate. Functionally, catalyzes the conversion of acetate into acetyl-CoA (AcCoA), an essential intermediate at the junction of anabolic and catabolic pathways. AcsA undergoes a two-step reaction. In the first half reaction, AcsA combines acetate with ATP to form acetyl-adenylate (AcAMP) intermediate. In the second half reaction, it can then transfer the acetyl group from AcAMP to the sulfhydryl group of CoA, forming the product AcCoA. This is Acetyl-coenzyme A synthetase from Rhizobium rhizogenes (strain K84 / ATCC BAA-868) (Agrobacterium radiobacter).